The sequence spans 285 residues: Putative cuticle collagen 75 (285 aa).

Triple-helical region stretches follow at residues 87–116 (GRIG…PGEL) and 133–261 (GPKG…PGLD). Over residues 207-231 (PGAPGIPGEEGLSGPTGQPGSPGSI) the composition is skewed to low complexity. The tract at residues 207–257 (PGAPGIPGEEGLSGPTGQPGSPGSIGAMGYEGAYGDRGEPGPPGPIGRRGG) is disordered.

It belongs to the cuticular collagen family. As to quaternary structure, collagen polypeptide chains are complexed within the cuticle by disulfide bonds and other types of covalent cross-links.

Functionally, nematode cuticles are composed largely of collagen-like proteins. The cuticle functions both as an exoskeleton and as a barrier to protect the worm from its environment. The protein is Putative cuticle collagen 75 (col-75) of Caenorhabditis elegans.